The sequence spans 293 residues: Pantothenate synthetase (293 aa).

Residue 30–37 coordinates ATP; sequence MGYLHKGH. His37 acts as the Proton donor in catalysis. Gln61 provides a ligand contact to (R)-pantoate. Gln61 is a binding site for beta-alanine. Residue 147 to 150 coordinates ATP; the sequence is GEKD. Residue Gln153 participates in (R)-pantoate binding. ATP is bound by residues Val176 and 184–187; that span reads CSSR.

The protein belongs to the pantothenate synthetase family. In terms of assembly, homodimer.

It is found in the cytoplasm. The catalysed reaction is (R)-pantoate + beta-alanine + ATP = (R)-pantothenate + AMP + diphosphate + H(+). It functions in the pathway cofactor biosynthesis; (R)-pantothenate biosynthesis; (R)-pantothenate from (R)-pantoate and beta-alanine: step 1/1. Catalyzes the condensation of pantoate with beta-alanine in an ATP-dependent reaction via a pantoyl-adenylate intermediate. This Brucella canis (strain ATCC 23365 / NCTC 10854 / RM-666) protein is Pantothenate synthetase.